The following is a 264-amino-acid chain: 3-methyl-2-oxobutanoate hydroxymethyltransferase (264 aa).

The Mg(2+) site is built by Asp45 and Asp84. 3-methyl-2-oxobutanoate is bound by residues 45 to 46, Asp84, and Lys112; that span reads DS. Residue Glu114 coordinates Mg(2+). Glu181 acts as the Proton acceptor in catalysis.

This sequence belongs to the PanB family. As to quaternary structure, homodecamer; pentamer of dimers. It depends on Mg(2+) as a cofactor.

Its subcellular location is the cytoplasm. It carries out the reaction 3-methyl-2-oxobutanoate + (6R)-5,10-methylene-5,6,7,8-tetrahydrofolate + H2O = 2-dehydropantoate + (6S)-5,6,7,8-tetrahydrofolate. It participates in cofactor biosynthesis; (R)-pantothenate biosynthesis; (R)-pantoate from 3-methyl-2-oxobutanoate: step 1/2. Catalyzes the reversible reaction in which hydroxymethyl group from 5,10-methylenetetrahydrofolate is transferred onto alpha-ketoisovalerate to form ketopantoate. The polypeptide is 3-methyl-2-oxobutanoate hydroxymethyltransferase (Escherichia coli O1:K1 / APEC).